The chain runs to 256 residues: Pyridoxine 5'-phosphate synthase (256 aa).

Position 10 (Asn10) interacts with 3-amino-2-oxopropyl phosphate. Residue 12–13 (DH) participates in 1-deoxy-D-xylulose 5-phosphate binding. Arg21 lines the 3-amino-2-oxopropyl phosphate pocket. The active-site Proton acceptor is the His46. Residues Arg48 and His53 each contribute to the 1-deoxy-D-xylulose 5-phosphate site. Glu73 functions as the Proton acceptor in the catalytic mechanism. Position 103 (Thr103) interacts with 1-deoxy-D-xylulose 5-phosphate. Residue His193 is the Proton donor of the active site. Residues Gly194 and 215-216 (GH) each bind 3-amino-2-oxopropyl phosphate.

The protein belongs to the PNP synthase family. Homooctamer; tetramer of dimers.

The protein localises to the cytoplasm. It carries out the reaction 3-amino-2-oxopropyl phosphate + 1-deoxy-D-xylulose 5-phosphate = pyridoxine 5'-phosphate + phosphate + 2 H2O + H(+). It functions in the pathway cofactor biosynthesis; pyridoxine 5'-phosphate biosynthesis; pyridoxine 5'-phosphate from D-erythrose 4-phosphate: step 5/5. Its function is as follows. Catalyzes the complicated ring closure reaction between the two acyclic compounds 1-deoxy-D-xylulose-5-phosphate (DXP) and 3-amino-2-oxopropyl phosphate (1-amino-acetone-3-phosphate or AAP) to form pyridoxine 5'-phosphate (PNP) and inorganic phosphate. This is Pyridoxine 5'-phosphate synthase from Zymomonas mobilis subsp. mobilis (strain ATCC 31821 / ZM4 / CP4).